A 202-amino-acid polypeptide reads, in one-letter code: MVIFGLTGGIGSGKSLVASYFKTLFKAVVFDADQVVCQLYNCDNSVIKLVKTYFPDSVDHGVVNKNSLRQHFFAYSNLWVEFQSTLHSIILEKQKNFIMFHNRQSTKYVVLDVPLLIESNFYSCCNFIIHVTTNRLLQMQRVLYRGLSIREFESIIAIQLSENDRKKFANFTIRTGLSKGDVLFQIQKIMFDISHRSKYLSC.

The DPCK domain maps to I3–C202. G11 to L16 is a binding site for ATP.

It belongs to the CoaE family.

It localises to the cytoplasm. The catalysed reaction is 3'-dephospho-CoA + ATP = ADP + CoA + H(+). The protein operates within cofactor biosynthesis; coenzyme A biosynthesis; CoA from (R)-pantothenate: step 5/5. In terms of biological role, catalyzes the phosphorylation of the 3'-hydroxyl group of dephosphocoenzyme A to form coenzyme A. This chain is Dephospho-CoA kinase, found in Ehrlichia chaffeensis (strain ATCC CRL-10679 / Arkansas).